A 395-amino-acid chain; its full sequence is G-protein coupled receptor 182 (395 aa).

Residues 1-53 (MSVIPSPRPVSTLEPDNDFRDIHNWTELLHLFNQTFTDCHIEFNENTKHVVLF) lie on the Extracellular side of the membrane. N-linked (GlcNAc...) asparagine glycans are attached at residues asparagine 24 and asparagine 33. A helical membrane pass occupies residues 54-75 (VFYLAIFVVGLVENVLVICVNC). Residues 76–86 (RRSGRVGMLNL) are Cytoplasmic-facing. The chain crosses the membrane as a helical span at residues 87–109 (YILNMAIADLGIILSLPVWMLEV). Residues 110–123 (MLEYTWLWGSFSCR) are Extracellular-facing. A disulfide bond links cysteine 122 and cysteine 198. Residues 124–145 (FIHYFYLVNMYSSIFFLTCLSI) traverse the membrane as a helical segment. Residues 146 to 166 (DRYVTLTNTSPSWQRHQHRIR) are Cytoplasmic-facing. The helical transmembrane segment at 167–189 (RAVCAGVWVLSAIIPLPEVVHIQ) threads the bilayer. The Extracellular portion of the chain corresponds to 190–213 (LLDGSEPMCLFLAPFETYSAWALA). The chain crosses the membrane as a helical span at residues 214 to 235 (VALSATILGFLLPFLLIAVFNI). Topologically, residues 236 to 254 (LTACRLRRQRQTESRRHCL) are cytoplasmic. Residues 255-276 (LMWAYIVVFAICWLPYQVTMLL) form a helical membrane-spanning segment. Topologically, residues 277 to 295 (LTLHGTHIFLHCHLVNLLY) are extracellular. The helical transmembrane segment at 296–316 (FFYEIIDCFSMLHCVANPILY) threads the bilayer. The Cytoplasmic portion of the chain corresponds to 317-395 (NFLSPSFRGR…QTPHLHSAIL (79 aa)). At serine 329 the chain carries Phosphoserine.

It belongs to the G-protein coupled receptor 1 family. In terms of tissue distribution, expressed in liver and lung.

It localises to the cell membrane. In terms of biological role, orphan receptor. This is G-protein coupled receptor 182 (Gpr182) from Mus musculus (Mouse).